A 491-amino-acid chain; its full sequence is MASTAAAASSQGCISWALRQRGLGGGGARAVPVLPRRRFCVSAAAGAGFDNENREYVIVGGGNAAGYAARTFVEHGMADGRLCIVSKEAYPPYERPALTKGYLFPPDKKPARLPGFHTCVGSGGQRQTAEWYKENGIEVLYEDPVVAFDGKTHTLKTSSGKILKYGSLIISTGCEASRLPAKIGGNLPGVHYIRDVADADSLVSSLGKAKKIVVIGGGYIGMEVAAAACGWNLDTTIIFPEDHIMPRLFTPSLAKKYEELYQQNGVKFIKGALIDKLEAGSDGRVSSAVLEDGSVVEADTVIVGIGARPVIGPFEAVGVNTKVGGIEVDSLFRTSIPGIFAIGDVAAFPLKMYDRMTRVEHVDHARKSAHHCVEALLTSHTKPYDYLPYFYSRVFEYEGSSRKIWWQFYGDNVGETIEVGSFEPKIATFWIDSDSRLKGVFLESGSSEEFSLLPQLAKSQPVVDKAKLKSATSVEDALEIARSSLHSGSSV.

The N-terminal 42 residues, 1–42 (MASTAAAASSQGCISWALRQRGLGGGGARAVPVLPRRRFCVS), are a transit peptide targeting the chloroplast. FAD-binding positions include 61–64 (GGNA), E88, R95, K100, and 194–195 (RD). NAD(+)-binding positions include 217 to 223 (GGYIGME), E241, R247, and G306. 219-223 (YIGME) serves as a coordination point for NADP(+). NADP(+) contacts are provided by R247 and G306. D344 is a binding site for FAD. Position 360-361 (360-361 (EH)) interacts with NAD(+). 360–361 (EH) lines the NADP(+) pocket. V362 is a binding site for FAD. Residue R366 participates in L-ascorbate binding. Y391 is a binding site for FAD. Y391 contributes to the NAD(+) binding site. Y391 lines the NADP(+) pocket. R393 contributes to the L-ascorbate binding site.

Belongs to the FAD-dependent oxidoreductase family. It depends on FAD as a cofactor.

It localises to the plastid. It is found in the chloroplast. The enzyme catalyses 2 monodehydro-L-ascorbate radical + NADH + H(+) = 2 L-ascorbate + NAD(+). Its function is as follows. Catalyzes the conversion of monodehydroascorbate to ascorbate, oxidizing NADH in the process. Ascorbate is a major antioxidant against reactive oxygen species (ROS) and nitric oxide (NO). In Oryza sativa subsp. japonica (Rice), this protein is Monodehydroascorbate reductase 5, chlorplastic.